A 287-amino-acid chain; its full sequence is Probable phosphite transport system-binding protein PtxB (287 aa).

The N-terminal stretch at 1-23 is a signal peptide; the sequence is MKRLSALLLTCLLSAVSSLSALA.

The protein belongs to the phosphate/phosphite/phosphonate binding protein family.

Probably forms part of a binding-protein-dependent phosphite transporter. Required for oxidation of phosphite to phosphate. This chain is Probable phosphite transport system-binding protein PtxB (ptxB), found in Stutzerimonas stutzeri (Pseudomonas stutzeri).